Reading from the N-terminus, the 121-residue chain is uncharacterized protein (121 aa).

This is an uncharacterized protein from Saccharomyces cerevisiae (strain ATCC 204508 / S288c) (Baker's yeast).